A 141-amino-acid polypeptide reads, in one-letter code: Putative pre-16S rRNA nuclease (141 aa).

It belongs to the YqgF nuclease family.

Its subcellular location is the cytoplasm. In terms of biological role, could be a nuclease involved in processing of the 5'-end of pre-16S rRNA. This is Putative pre-16S rRNA nuclease from Cupriavidus pinatubonensis (strain JMP 134 / LMG 1197) (Cupriavidus necator (strain JMP 134)).